The sequence spans 422 residues: L-threonine dehydratase biosynthetic IlvA (422 aa).

Lys56 bears the N6-(pyridoxal phosphate)lysine mark. Pyridoxal 5'-phosphate-binding positions include Asn83, 189–193 (GGGGL), and Ser315. The 75-residue stretch at 339 to 413 (HYFILNFPQR…FDKSNIYINE (75 aa)) folds into the ACT-like domain.

This sequence belongs to the serine/threonine dehydratase family. As to quaternary structure, homotetramer. It depends on pyridoxal 5'-phosphate as a cofactor.

The enzyme catalyses L-threonine = 2-oxobutanoate + NH4(+). It participates in amino-acid biosynthesis; L-isoleucine biosynthesis; 2-oxobutanoate from L-threonine: step 1/1. In terms of biological role, catalyzes the anaerobic formation of alpha-ketobutyrate and ammonia from threonine in a two-step reaction. The first step involved a dehydration of threonine and a production of enamine intermediates (aminocrotonate), which tautomerizes to its imine form (iminobutyrate). Both intermediates are unstable and short-lived. The second step is the nonenzymatic hydrolysis of the enamine/imine intermediates to form 2-ketobutyrate and free ammonia. In the low water environment of the cell, the second step is accelerated by RidA. In Staphylococcus saprophyticus subsp. saprophyticus (strain ATCC 15305 / DSM 20229 / NCIMB 8711 / NCTC 7292 / S-41), this protein is L-threonine dehydratase biosynthetic IlvA (ilvA).